The following is a 426-amino-acid chain: UDP-N-acetylglucosamine 1-carboxyvinyltransferase (426 aa).

22–23 serves as a coordination point for phosphoenolpyruvate; it reads KN. A UDP-N-acetyl-alpha-D-glucosamine-binding site is contributed by R93. D117 (proton donor) is an active-site residue. 2 residues coordinate UDP-N-acetyl-alpha-D-glucosamine: D312 and M334.

Belongs to the EPSP synthase family. MurA subfamily.

Its subcellular location is the cytoplasm. The catalysed reaction is phosphoenolpyruvate + UDP-N-acetyl-alpha-D-glucosamine = UDP-N-acetyl-3-O-(1-carboxyvinyl)-alpha-D-glucosamine + phosphate. It functions in the pathway cell wall biogenesis; peptidoglycan biosynthesis. In terms of biological role, cell wall formation. Adds enolpyruvyl to UDP-N-acetylglucosamine. The sequence is that of UDP-N-acetylglucosamine 1-carboxyvinyltransferase from Treponema denticola (strain ATCC 35405 / DSM 14222 / CIP 103919 / JCM 8153 / KCTC 15104).